Here is a 223-residue protein sequence, read N- to C-terminus: Phosphoribosylformylglycinamidine synthase subunit PurQ (223 aa).

The region spanning 2-223 is the Glutamine amidotransferase type-1 domain; the sequence is KVAIIRFPGT…LLENFINFNF (222 aa). The active-site Nucleophile is the Cys-84. Active-site residues include His-192 and Glu-194.

Part of the FGAM synthase complex composed of 1 PurL, 1 PurQ and 2 PurS subunits.

It localises to the cytoplasm. The enzyme catalyses N(2)-formyl-N(1)-(5-phospho-beta-D-ribosyl)glycinamide + L-glutamine + ATP + H2O = 2-formamido-N(1)-(5-O-phospho-beta-D-ribosyl)acetamidine + L-glutamate + ADP + phosphate + H(+). The catalysed reaction is L-glutamine + H2O = L-glutamate + NH4(+). The protein operates within purine metabolism; IMP biosynthesis via de novo pathway; 5-amino-1-(5-phospho-D-ribosyl)imidazole from N(2)-formyl-N(1)-(5-phospho-D-ribosyl)glycinamide: step 1/2. Functionally, part of the phosphoribosylformylglycinamidine synthase complex involved in the purines biosynthetic pathway. Catalyzes the ATP-dependent conversion of formylglycinamide ribonucleotide (FGAR) and glutamine to yield formylglycinamidine ribonucleotide (FGAM) and glutamate. The FGAM synthase complex is composed of three subunits. PurQ produces an ammonia molecule by converting glutamine to glutamate. PurL transfers the ammonia molecule to FGAR to form FGAM in an ATP-dependent manner. PurS interacts with PurQ and PurL and is thought to assist in the transfer of the ammonia molecule from PurQ to PurL. The sequence is that of Phosphoribosylformylglycinamidine synthase subunit PurQ from Campylobacter jejuni subsp. jejuni serotype O:2 (strain ATCC 700819 / NCTC 11168).